The following is a 92-amino-acid chain: C-C motif chemokine 4 (92 aa).

The signal sequence occupies residues 1–23; the sequence is MKLCVTVLSLLVLVAAFCSPALS. 2 cysteine pairs are disulfide-bonded: cysteine 34/cysteine 58 and cysteine 35/cysteine 74.

It belongs to the intercrine beta (chemokine CC) family. In terms of assembly, homodimer. Interacts with CCR5.

The protein resides in the secreted. Its function is as follows. Monokine with inflammatory and chemokinetic properties. The chain is C-C motif chemokine 4 (CCL4) from Sus scrofa (Pig).